Consider the following 643-residue polypeptide: tRNA 5-methylaminomethyl-2-thiouridine biosynthesis bifunctional protein MnmC (643 aa).

The tract at residues 1-223 (MPDRLVSATL…VDDRLVGDYA (223 aa)) is tRNA (mnm(5)s(2)U34)-methyltransferase. The interval 247 to 643 (IGAGLAGCAV…LRARRVGSAG (397 aa)) is FAD-dependent cmnm(5)s(2)U34 oxidoreductase.

It in the N-terminal section; belongs to the methyltransferase superfamily. tRNA (mnm(5)s(2)U34)-methyltransferase family. This sequence in the C-terminal section; belongs to the DAO family. Requires FAD as cofactor.

It localises to the cytoplasm. It carries out the reaction 5-aminomethyl-2-thiouridine(34) in tRNA + S-adenosyl-L-methionine = 5-methylaminomethyl-2-thiouridine(34) in tRNA + S-adenosyl-L-homocysteine + H(+). Functionally, catalyzes the last two steps in the biosynthesis of 5-methylaminomethyl-2-thiouridine (mnm(5)s(2)U) at the wobble position (U34) in tRNA. Catalyzes the FAD-dependent demodification of cmnm(5)s(2)U34 to nm(5)s(2)U34, followed by the transfer of a methyl group from S-adenosyl-L-methionine to nm(5)s(2)U34, to form mnm(5)s(2)U34. In Burkholderia orbicola (strain AU 1054), this protein is tRNA 5-methylaminomethyl-2-thiouridine biosynthesis bifunctional protein MnmC.